We begin with the raw amino-acid sequence, 308 residues long: Membrane protein insertase YidC 1 (308 aa).

A signal peptide spans 1–22 (MKSIKRFALSAMGAAMLLVLTG). Cysteine 23 is lipidated: N-palmitoyl cysteine. Cysteine 23 carries the S-diacylglycerol cysteine lipid modification. Transmembrane regions (helical) follow at residues 60–80 (FGVA…PLGI), 135–155 (FGGV…AIYF), 168–188 (YLGI…GVLY), 211–225 (MIYM…FSLF), and 230–252 (VTLY…NYIV). A disordered region spans residues 263-308 (ELAKNPSKASAFSTPSGRKDVTPEQPTAITSKKKHKNRNAGKQRSR). Over residues 269–278 (SKASAFSTPS) the composition is skewed to polar residues. Basic residues predominate over residues 293–308 (SKKKHKNRNAGKQRSR).

This sequence belongs to the OXA1/ALB3/YidC family. Type 2 subfamily.

The protein resides in the cell membrane. Required for the insertion and/or proper folding and/or complex formation of integral membrane proteins into the membrane. Involved in integration of membrane proteins that insert both dependently and independently of the Sec translocase complex, as well as at least some lipoproteins. This chain is Membrane protein insertase YidC 1, found in Streptococcus pneumoniae (strain ATCC BAA-255 / R6).